Here is a 351-residue protein sequence, read N- to C-terminus: Methionine import ATP-binding protein MetN (351 aa).

Residues 2-238 enclose the ABC transporter domain; sequence IKLNHINKTY…PKHPITRELI (237 aa). 35-42 is a binding site for ATP; it reads GYSGAGKS.

This sequence belongs to the ABC transporter superfamily. Methionine importer (TC 3.A.1.24) family. The complex is composed of two ATP-binding proteins (MetN), two transmembrane proteins (MetI) and a solute-binding protein (MetQ).

It is found in the cell inner membrane. It carries out the reaction L-methionine(out) + ATP + H2O = L-methionine(in) + ADP + phosphate + H(+). It catalyses the reaction D-methionine(out) + ATP + H2O = D-methionine(in) + ADP + phosphate + H(+). Part of the ABC transporter complex MetNIQ involved in methionine import. Responsible for energy coupling to the transport system. In Helicobacter hepaticus (strain ATCC 51449 / 3B1), this protein is Methionine import ATP-binding protein MetN.